Here is a 484-residue protein sequence, read N- to C-terminus: Trigger factor (484 aa).

One can recognise a PPIase FKBP-type domain in the interval 162–243 (GDFISIDLSA…VKSVKERELP (82 aa)). A disordered region spans residues 427–484 (DGNTIDTSEFFGKPPENDVTDLLDDDADGDAGVDADGDTENSAEPADADSADTAQGAG). The span at 444–476 (DVTDLLDDDADGDAGVDADGDTENSAEPADADS) shows a compositional bias: acidic residues.

The protein belongs to the FKBP-type PPIase family. Tig subfamily.

Its subcellular location is the cytoplasm. The enzyme catalyses [protein]-peptidylproline (omega=180) = [protein]-peptidylproline (omega=0). Involved in protein export. Acts as a chaperone by maintaining the newly synthesized protein in an open conformation. Functions as a peptidyl-prolyl cis-trans isomerase. The polypeptide is Trigger factor (Mycobacterium ulcerans (strain Agy99)).